Consider the following 473-residue polypeptide: ATP synthase subunit beta (473 aa).

Position 158–165 (158–165 (GGAGVGKT)) interacts with ATP.

It belongs to the ATPase alpha/beta chains family. As to quaternary structure, F-type ATPases have 2 components, CF(1) - the catalytic core - and CF(0) - the membrane proton channel. CF(1) has five subunits: alpha(3), beta(3), gamma(1), delta(1), epsilon(1). CF(0) has three main subunits: a(1), b(2) and c(9-12). The alpha and beta chains form an alternating ring which encloses part of the gamma chain. CF(1) is attached to CF(0) by a central stalk formed by the gamma and epsilon chains, while a peripheral stalk is formed by the delta and b chains.

Its subcellular location is the cell membrane. It catalyses the reaction ATP + H2O + 4 H(+)(in) = ADP + phosphate + 5 H(+)(out). Its function is as follows. Produces ATP from ADP in the presence of a proton gradient across the membrane. The catalytic sites are hosted primarily by the beta subunits. This is ATP synthase subunit beta from Geobacillus thermodenitrificans (strain NG80-2).